Here is a 209-residue protein sequence, read N- to C-terminus: Na(+)-translocating NADH-quinone reductase subunit D (209 aa).

A run of 5 helical transmembrane segments spans residues 42–62 (LVMT…ISLI), 70–90 (VRII…DQIL), 103–123 (VFVG…AYAM), 131–151 (FMDG…VGFV), and 178–198 (NGLF…IWGL).

Belongs to the NqrDE/RnfAE family. As to quaternary structure, composed of six subunits; NqrA, NqrB, NqrC, NqrD, NqrE and NqrF.

Its subcellular location is the cell inner membrane. The catalysed reaction is a ubiquinone + n Na(+)(in) + NADH + H(+) = a ubiquinol + n Na(+)(out) + NAD(+). In terms of biological role, NQR complex catalyzes the reduction of ubiquinone-1 to ubiquinol by two successive reactions, coupled with the transport of Na(+) ions from the cytoplasm to the periplasm. NqrA to NqrE are probably involved in the second step, the conversion of ubisemiquinone to ubiquinol. The polypeptide is Na(+)-translocating NADH-quinone reductase subunit D (Yersinia enterocolitica serotype O:8 / biotype 1B (strain NCTC 13174 / 8081)).